The chain runs to 239 residues: Homeobox-leucine zipper protein HOX12 (239 aa).

The disordered stretch occupies residues 22-65; it reads PEAATSGGEQKKARQRRRRKVKPEAAAALAGESGGDEQAKKRRL. Residues 58–117 constitute a DNA-binding region (homeobox); it reads EQAKKRRLSDEQARFLEMSFKKERKLETPRKVQLAAELGLDAKQVAVWFQNRRARHKSKL. Residues 107–168 are a coiled coil; it reads QNRRARHKSK…KLAAVAAATT (62 aa).

This sequence belongs to the HD-ZIP homeobox family. Class I subfamily. As to expression, expressed in seedlings, roots, stems, leaf sheaths and panicles.

It is found in the nucleus. Functionally, probable transcription factor. The sequence is that of Homeobox-leucine zipper protein HOX12 (HOX12) from Oryza sativa subsp. indica (Rice).